The sequence spans 585 residues: Mycosin-5 (585 aa).

Residues 1–39 (MQRFGTGSSRSWCGRAGTATIAAVLLASGALTGLPPAYA) form the signal peptide. The region spanning 83–521 (PKYMEMLNLN…YGVVDPVAAL (439 aa)) is the Peptidase S8 domain. Active-site charge relay system residues include Asp109 and His141. Residues 163 to 173 (VPRRPVTIPTT) are compositionally biased toward low complexity. The tract at residues 163 to 269 (VPRRPVTIPT…PALGPPPDAF (107 aa)) is disordered. Pro residues-rich tracts occupy residues 196–224 (PAPP…PQPP) and 252–267 (NPHP…PPPD). Ser466 serves as the catalytic Charge relay system. The helical transmembrane segment at 552–572 (VPIWVAAGGLAGALLIGGAVF) threads the bilayer.

Belongs to the peptidase S8 family.

The protein resides in the cell membrane. This is Mycosin-5 from Mycobacterium tuberculosis (strain ATCC 25618 / H37Rv).